A 237-amino-acid polypeptide reads, in one-letter code: Golgi anti-apoptotic protein (237 aa).

Topologically, residues 1–37 (MAMPSLSACSSIEDDFNYGSSVASASVHIRMAFLRKV) are cytoplasmic. A helical transmembrane segment spans residues 38–58 (YGILCLQFLLTTATTAVFLYF). Over 59–67 (DCMRTFIQG) the chain is Lumenal. The chain crosses the membrane as a helical span at residues 68 to 88 (SPVLILASMFGSIGLIFALTL). Residues 89 to 94 (HRHKHP) are Cytoplasmic-facing. The helical transmembrane segment at 95–115 (LNLYLLCGFTLSESLTLASVV) threads the bilayer. Thr-116 is a topological domain (lumenal). Residues 117–137 (FYDVHVVMQAFMLTTAAFLAL) form a helical membrane-spanning segment. The Cytoplasmic segment spans residues 138-151 (TTYTLQSKRDFSKL). A helical membrane pass occupies residues 152–172 (GAGLFAALWILILSGLLGIFV). Over 173–174 (QN) the chain is Lumenal. Residues 175 to 195 (ETVKLVLSAFGALVFCGFIIY) traverse the membrane as a helical segment. Residues 196–209 (DTHSLIHKLSPEEY) are Cytoplasmic-facing. Residues 210 to 230 (VLASINLYLDIINLFLHLLQL) constitute an intramembrane region (helical). The Cytoplasmic segment spans residues 231–237 (LEVSNKK).

This sequence belongs to the BI1 family. LFG subfamily.

It localises to the host Golgi apparatus membrane. May affect virulence through inhibition of apoptosis. The sequence is that of Golgi anti-apoptotic protein (L6) from Vaccinia virus (strain LC16m0) (VACV).